We begin with the raw amino-acid sequence, 248 residues long: Phycocyanobilin:ferredoxin oxidoreductase (248 aa).

The protein belongs to the HY2 family.

It catalyses the reaction (2R,3Z)-phycocyanobilin + 4 oxidized [2Fe-2S]-[ferredoxin] = biliverdin IXalpha + 4 reduced [2Fe-2S]-[ferredoxin] + 4 H(+). In terms of biological role, catalyzes the four-electron reduction of biliverdin IX-alpha (2-electron reduction at both the A and D rings); the reaction proceeds via an isolatable 2-electron intermediate, 181,182-dihydrobiliverdin. The protein is Phycocyanobilin:ferredoxin oxidoreductase (pcyA) of Synechococcus elongatus (strain ATCC 33912 / PCC 7942 / FACHB-805) (Anacystis nidulans R2).